The primary structure comprises 88 residues: Small ribosomal subunit protein uS15 (88 aa).

The protein belongs to the universal ribosomal protein uS15 family. Part of the 30S ribosomal subunit. Forms a bridge to the 50S subunit in the 70S ribosome, contacting the 23S rRNA.

One of the primary rRNA binding proteins, it binds directly to 16S rRNA where it helps nucleate assembly of the platform of the 30S subunit by binding and bridging several RNA helices of the 16S rRNA. Its function is as follows. Forms an intersubunit bridge (bridge B4) with the 23S rRNA of the 50S subunit in the ribosome. The chain is Small ribosomal subunit protein uS15 from Desulfitobacterium hafniense (strain Y51).